A 65-amino-acid polypeptide reads, in one-letter code: Large ribosomal subunit protein bL35 (65 aa).

It belongs to the bacterial ribosomal protein bL35 family.

This is Large ribosomal subunit protein bL35 from Chlorobium phaeovibrioides (strain DSM 265 / 1930) (Prosthecochloris vibrioformis (strain DSM 265)).